A 507-amino-acid polypeptide reads, in one-letter code: Histidine ammonia-lyase (507 aa).

Positions 141–143 (ASG) form a cross-link, 5-imidazolinone (Ala-Gly). A 2,3-didehydroalanine (Ser) modification is found at S142.

This sequence belongs to the PAL/histidase family. Post-translationally, contains an active site 4-methylidene-imidazol-5-one (MIO), which is formed autocatalytically by cyclization and dehydration of residues Ala-Ser-Gly.

It is found in the cytoplasm. It carries out the reaction L-histidine = trans-urocanate + NH4(+). The protein operates within amino-acid degradation; L-histidine degradation into L-glutamate; N-formimidoyl-L-glutamate from L-histidine: step 1/3. The chain is Histidine ammonia-lyase from Burkholderia pseudomallei (strain 668).